We begin with the raw amino-acid sequence, 1938 residues long: MNIDFSDPDFQYLAVDRKKLMKEQTAAFDGKKNCWVPDEKEGFASAEIQSSKGDEITVKIVADSSTRTVKKDDIQSMNPPKFEKLEDMANMTYLNEASVLYNLRSRYTSGLIYTYSGLFCIAVNPYRRLPIYTDSVIAKYRGKRKTEIPPHLFSVADNAYQNMVTDRENQSCLITGESGAGKTENTKKVIMYLAKVACAVKKKDEEASDKKEGSLEDQIIQANPVLEAYGNAKTTRNNNSSRFGKFIRIHFGPTGKIAGADIETYLLEKSRVTYQQSAERNYHIFYQICSNAIPELNDVMLVTPDSGLYSFINQGCLTVDNIDDVEEFKLCDEAFDILGFTKEEKQSMFKCTASILHMGEMKFKQRPREEQAESDGTAEAEKVAFLCGINAGDLLKALLKPKVKVGTEMVTKGQNMNQVVNSVGALAKSLYDRMFNWLVRRVNKTLDTKAKRNYYIGVLDIAGFEIFDFNSFEQLCINYTNERLQQFFNHHMFILEQEEYKKEGIAWEFIDFGMDLQMCIDLIEKPMGILSILEEECMFPKADDKSFQDKLYQNHMGKNRMFTKPGKPTRPNQGPAHFELHHYAGNVPYSITGWLEKNKDPINENVVALLGASKEPLVAELFKAPEEPAGGGKKKKGKSSAFQTISAVHRESLNKLMKNLYSTHPHFVRCIIPNELKQPGLVDAELVLHQLQCNGVLEGIRICRKGFPSRLIYSEFKQRYSILAPNAIPQGFVDGKTVSEKILAGLQMDPAEYRLGTTKVFFKAGVLGNLEEMRDERLSKIISMFQAHIRGYLIRKAYKKLQDQRIGLSVIQRNIRKWLVLRNWQWWKLYSKVKPLLSIARQEEEMKEQLKQMDKMKEDLAKTERIKKELEEQNVTLLEQKNDLFLQLQTLEDSMGDQEERVEKLIMQKADFESQIKELEERLLDEEDAAADLEGIKKKMEADNANLKKDIGDLENTLQKAEQDKAHKDNQISTLQGEISQQDEHIGKLNKEKKALEEANKKTSDSLQAEEDKCNHLNKLKAKLEQALDELEDNLEREKKVRGDVEKAKRKVEQDLKSTQENVEDLERVKRELEENVRRKEAEISSLNSKLEDEQNLVSQLQRKIKELQARIEELEEELEAERNARAKVEKQRAELNRELEELGERLDEAGGATSAQIELNKKREAELLKIRRDLEEASLQHEAQISALRKKHQDAANEMADQVDQLQKVKSKLEKDKKDLKREMDDLESQMTHNMKNKGCSEKVMKQFESQMSDLNARLEDSQRSINELQSQKSRLQAENSDLTRQLEDAEHRVSVLSKEKSQLSSQLEDARRSLEEETRARSKLQNEVRNMHADMDAIREQLEEEQESKSDVQRQLSKANNEIQQWRSKFESEGANRTEELEDQKRKLLGKLSEAEQTTEAANAKCSALEKAKSRLQQELEDMSIEVDRANASVNQMEKKQRAFDKTTAEWQAKVNSLQSELENSQKESRGYSAELYRIKASIEEYQDSIGALRRENKNLADEIHDLTDQLSEGGRSTHELDKARRRLEMEKEELQAALEEAEGALEQEEAKVMRAQLEIATVRNEIDKRIQEKEEEFDNTRRNHQRALESMQASLEAEAKGKADAMRIKKKLEQDINELEVALDASNRGKAEMEKTVKRYQQQIREMQTSIEEEQRQRDEARESYNMAERRCTLMSGEVEELRAALEQAERARKASDNELADANDRVNELTSQVSSVQGQKRKLEGDINAMQTDLDEMHGELKGADERCKKAMADAARLADELRAEQDHSNQVEKVRKNLESQVKEFQIRLDEAEASSLKGGKKMIQKLESRVHELEAELDNEQRRHAETQKNMRKADRRLKELAFQADEDRKNQERLQELIDKLNAKIKTFKRQVEEAEEIAAINLAKYRKAQHELEEAEERADTADSTLQKFRAKSRSSVSVQRSSVSVSASN.

One can recognise a Myosin N-terminal SH3-like domain in the interval D29–P79. The region spanning E83–D775 is the Myosin motor domain. G176–T183 serves as a coordination point for ATP. The actin-binding stretch occupies residues L653–E675. An IQ domain is found at L778 to R805. The tract at residues L836 to N1938 is rodlike tail (S2 and LMM domains). The stretch at L836 to N1938 forms a coiled coil. 2 stretches are compositionally biased toward basic and acidic residues: residues V1041 to S1058 and S1212 to M1225. 4 disordered regions span residues V1041–N1062, S1187–N1332, L1344–N1363, and H1898–N1938. Over residues R1265 to T1285 the composition is skewed to polar residues. Basic and acidic residues-rich tracts occupy residues R1286–S1303, E1310–N1332, and L1344–V1354. Residues R1922–N1938 are compositionally biased toward low complexity.

Belongs to the TRAFAC class myosin-kinesin ATPase superfamily. Myosin family. Muscle myosin is a hexameric protein that consists of 2 heavy chain subunits (MHC), 2 alkali light chain subunits (MLC) and 2 regulatory light chain subunits (MLC-2).

The protein localises to the cytoplasm. It localises to the myofibril. Functionally, muscle contraction. Its function is as follows. Myosin is a protein that binds to F-actin and has ATPase activity that is activated by F-actin. The sequence is that of Myosin heavy chain, striated muscle from Argopecten irradians (Bay scallop).